A 308-amino-acid polypeptide reads, in one-letter code: Ferrochelatase (308 aa).

Residues H167 and E239 each contribute to the Fe cation site.

The protein belongs to the ferrochelatase family.

It is found in the cytoplasm. The catalysed reaction is heme b + 2 H(+) = protoporphyrin IX + Fe(2+). The protein operates within porphyrin-containing compound metabolism; protoheme biosynthesis; protoheme from protoporphyrin-IX: step 1/1. In terms of biological role, catalyzes the ferrous insertion into protoporphyrin IX. This Thermoplasma acidophilum (strain ATCC 25905 / DSM 1728 / JCM 9062 / NBRC 15155 / AMRC-C165) protein is Ferrochelatase.